Consider the following 3364-residue polypeptide: Salivary gland surface protein 1 (3364 aa).

Beta-propeller regions lie at residues 1 to 344 and 705 to 1216; these read MLRI…VVDA and FEQE…LKAL. Asn59 carries N-linked (GlcNAc...) asparagine glycosylation. 2 disulfide bridges follow: Cys251–Cys297 and Cys1128–Cys1139. Positions 345–2733 are rhs/YD-repeats; the sequence is VEPKLDQGSP…PVSQIDPDGQ (2389 aa). Asn1149 carries an N-linked (GlcNAc...) asparagine glycan. The tract at residues 1345 to 1494 is carbohydrate-binding module (CBM); that stretch reads NQELVQFLGF…VHVDHVRLSP (150 aa). Residues 1575 to 1715 form a lectin carbohydrate-recognition domain (lectin-CRD) region; it reads HSWVESFSPY…VGIKDVIVME (141 aa). A wedge domain region spans residues 2225–2304; sequence HDKCDQNLIP…SEKMLEQGYP (80 aa). 2 disulfide bridges follow: Cys2253-Cys2285 and Cys2407-Cys2421. 5 helical membrane passes run 2734–2754, 2774–2794, 2805–2825, 2844–2864, and 2878–2898; these read IAVTLVLMIIGAIVGAYLGAA, IGLFAGAIMGAFAVYGGAATF, MIAGALATGVISVAGAFLGAA, WNGLLSGASIAVSFPSGFVGI, and MIYASLMVGGFLLFVYLGGGM. The tract at residues 3126-3216 is tox-SGS; it reads YSPDSDGNQI…ARIAPAALRN (91 aa).

Post-translationally, probably cleaved at the C-terminus. Female saliva (at protein level). Female salivary gland (at protein level). Not detected in female carcass without salivary glands. Not detected in male tissues.

Its subcellular location is the cell membrane. The protein localises to the secreted. (Microbial infection) Facilitates, but is not essential for, invasion of salivary glands by Plasmodium gallinaceum. Plays a role in Plasmodium gallinaceum oocyst development in mosquito midgut. In terms of biological role, (Microbial infection) Probably facilitates Zika virus replication in salivary glands. This chain is Salivary gland surface protein 1, found in Aedes aegypti (Yellowfever mosquito).